The primary structure comprises 380 residues: Protein Wnt-5a (380 aa).

Positions 1-37 (MKKPIGILSPGVALGTAGGAMSSKFFLMALATFFSFA) are cleaved as a signal peptide. A propeptide spanning residues 38-61 (QVVIEANSWWSLGMNNPVQMSEVH) is cleaved from the precursor. A disulfide bridge links Cys104 with Cys115. Asn114 and Asn120 each carry an N-linked (GlcNAc...) asparagine glycan. Disulfide bonds link Cys154–Cys162, Cys164–Cys182, Cys238–Cys252, Cys240–Cys247, Cys309–Cys340, Cys325–Cys335, Cys339–Cys379, Cys355–Cys370, Cys357–Cys367, and Cys362–Cys363. Ser244 carries the O-palmitoleoyl serine; by PORCN lipid modification. N-linked (GlcNAc...) asparagine glycosylation is found at Asn312 and Asn326.

The protein belongs to the Wnt family. As to quaternary structure, forms a soluble 1:1 complex with AFM; this prevents oligomerization and is required for prolonged biological activity. The complex with AFM may represent the physiological form in body fluids. Homooligomer; disulfide-linked, leading to inactivation (in vitro). Interacts with PORCN. Interacts with WLS. Interacts with glypican GCP3. Interacts with PKD1 (via extracellular domain). Interacts with TMEM67. Glycosylation is necessary for secretion but not for activity. In terms of processing, palmitoleoylation is required for efficient binding to frizzled receptors. Depalmitoleoylation leads to Wnt signaling pathway inhibition. Post-translationally, proteolytic processing by TIKI1 and TIKI2 promotes oxidation and formation of large disulfide-bond oligomers, leading to inactivation of WNT5A.

It localises to the secreted. It is found in the extracellular space. The protein localises to the extracellular matrix. Functionally, ligand for members of the frizzled family of seven transmembrane receptors. Can activate or inhibit canonical Wnt signaling, depending on receptor context. In the presence of FZD4, activates beta-catenin signaling. In the presence of ROR2, inhibits the canonical Wnt pathway by promoting beta-catenin degradation through a GSK3-independent pathway which involves down-regulation of beta-catenin-induced reporter gene expression. Suppression of the canonical pathway allows chondrogenesis to occur and inhibits tumor formation. Stimulates cell migration. Decreases proliferation, migration, invasiveness and clonogenicity of carcinoma cells and may act as a tumor suppressor. Mediates motility of melanoma cells. Required during embryogenesis for extension of the primary anterior-posterior axis and for outgrowth of limbs and the genital tubercle. Inhibits type II collagen expression in chondrocytes. This is Protein Wnt-5a (Wnt5a) from Rattus norvegicus (Rat).